A 493-amino-acid chain; its full sequence is Probable cytosol aminopeptidase (493 aa).

Positions 262 and 267 each coordinate Mn(2+). Residue Lys274 is part of the active site. Asp286, Asp345, and Glu347 together coordinate Mn(2+). Residue Arg349 is part of the active site.

This sequence belongs to the peptidase M17 family. Requires Mn(2+) as cofactor.

The protein resides in the cytoplasm. It carries out the reaction Release of an N-terminal amino acid, Xaa-|-Yaa-, in which Xaa is preferably Leu, but may be other amino acids including Pro although not Arg or Lys, and Yaa may be Pro. Amino acid amides and methyl esters are also readily hydrolyzed, but rates on arylamides are exceedingly low.. It catalyses the reaction Release of an N-terminal amino acid, preferentially leucine, but not glutamic or aspartic acids.. Its function is as follows. Presumably involved in the processing and regular turnover of intracellular proteins. Catalyzes the removal of unsubstituted N-terminal amino acids from various peptides. The chain is Probable cytosol aminopeptidase from Cyanothece sp. (strain PCC 7425 / ATCC 29141).